The following is a 421-amino-acid chain: Tyrosine--tRNA ligase (421 aa).

Tyr-42 serves as a coordination point for L-tyrosine. Positions 47–56 (CTAPSLHVGS) match the 'HIGH' region motif. Residues Tyr-179 and Gln-183 each contribute to the L-tyrosine site. The short motif at 239 to 243 (KMGKT) is the 'KMSKS' region element. Lys-242 is a binding site for ATP. The S4 RNA-binding domain occupies 354 to 419 (LGILAAFAKA…RKKHVLLRLA (66 aa)).

It belongs to the class-I aminoacyl-tRNA synthetase family. TyrS type 1 subfamily. Homodimer.

It localises to the cytoplasm. It carries out the reaction tRNA(Tyr) + L-tyrosine + ATP = L-tyrosyl-tRNA(Tyr) + AMP + diphosphate + H(+). In terms of biological role, catalyzes the attachment of tyrosine to tRNA(Tyr) in a two-step reaction: tyrosine is first activated by ATP to form Tyr-AMP and then transferred to the acceptor end of tRNA(Tyr). In Beijerinckia indica subsp. indica (strain ATCC 9039 / DSM 1715 / NCIMB 8712), this protein is Tyrosine--tRNA ligase.